A 230-amino-acid polypeptide reads, in one-letter code: GTP cyclohydrolase III (230 aa).

This sequence belongs to the archaeal-type GTP cyclohydrolase family.

It carries out the reaction GTP + 3 H2O = 2-amino-5-formylamino-6-(5-phospho-D-ribosylamino)pyrimidin-4(3H)-one + 2 phosphate + 2 H(+). In terms of biological role, catalyzes the formation of 2-amino-5-formylamino-6-ribofuranosylamino-4(3H)-pyrimidinone ribonucleotide monophosphate and inorganic phosphate from GTP. Also has an independent pyrophosphate phosphohydrolase activity. This is GTP cyclohydrolase III from Saccharolobus islandicus (strain M.16.27) (Sulfolobus islandicus).